The chain runs to 416 residues: MDVRLHLKQFALLCFISLLLTPCGLACGPGRGYGKRRHPKKLTPLAYKQFIPNVAEKTLGASGKYEGKITRNSERFKELIPNYNPDIIFKDEENTNADRLMTKRCKDKLNSLAISVMNHWPGVKLRVTEGWDEDGHHLEESLHYEGRAVDITTSDRDKSKYGMLSRLAVEAGFDWVYYESKAHIHCSVKAENSVAAKSGGCFPGSGTVTLGDGTRKPIKDLKVGDRVLAADEKGNVLISDFIMFIDHDPTTRRQFIVIETSEPFTKLTLTAAHLVFVGNSSAASGITATFASNVKPGDTVLVWEDTCESLKSVTVKRIYTEEHEGSFAPVTAHGTIIVDQVLASCYAVIENHKWAHWAFAPVRLCHKLMTWLFPARESNVNFQEDGIHWYSNMLFHIGSWLLDRDSFHPLGILHLS.

Residues 1–26 (MDVRLHLKQFALLCFISLLLTPCGLA) form the signal peptide. C27 is lipidated: N-palmitoyl cysteine. E92, E93, D98, T128, E129, D132, and D134 together coordinate Ca(2+). 3 residues coordinate Zn(2+): H143, D150, and H185. G200 carries the Cholesterol glycine ester lipid modification.

Belongs to the hedgehog family. As to quaternary structure, multimer. In terms of assembly, interacts with HHATL/GUP1 which negatively regulates HHAT-mediated palmitoylation of the TWHH N-terminus. Interacts with BOC and CDON. Interacts with HHIP. Interacts with DISP1 via its cholesterol anchor. Interacts with SCUBE2. In terms of processing, the C-terminal domain displays an autoproteolysis activity and a cholesterol transferase activity. Both activities result in the cleavage of the full-length protein into two parts (N-product and C-product) followed by the covalent attachment of a cholesterol moiety to the C-terminal of the newly generated N-product. Cholesterylation is required for the tiggy-winkle hedgehog protein N-product targeting to lipid rafts and multimerization. N-product is the active species in both local and long-range signaling, whereas the C-product is degraded in the endoplasmic reticulum. N-palmitoylation by HHAT of N-product is required for tiggy-winkle hedgehog protein N-product multimerization and full activity. It is a prerequisite for the membrane-proximal positioning and the subsequent shedding of this N-terminal peptide. Post-translationally, the lipidated N- and C-terminal peptides of N-product can be cleaved (shedding). The N-terminal palmitoylated peptide is cleaved at the Cardin-Weintraub (CW) motif site. The cleavage reduced the interactions with heparan sulfate. The cleavage is enhanced by SCUBE2. As to expression, expressed in the ventral midline of the neural tube and brain. In the developing brain, expression occurs in domains that include a discrete region in the floor of the diencephalon. Not detected in the notochord or developing fin bud.

The protein localises to the cell membrane. It is found in the endoplasmic reticulum membrane. Its subcellular location is the golgi apparatus membrane. Its function is as follows. The C-terminal part of the tiggy-winkle hedgehog protein precursor displays an autoproteolysis and a cholesterol transferase activity. Both activities result in the cleavage of the full-length protein into two parts (N-product and C-product) followed by the covalent attachment of a cholesterol moiety to the C-terminal of the newly generated N-product. Both activities occur in the endoplasmic reticulum. Once cleaved, the C-product is degraded in the endoplasmic reticulum. In terms of biological role, the dually lipidated tiggy-winkle hedgehog protein N-product is a morphogen which is essential for a variety of patterning events during development. Involved in dorso-ventral patterning of the brain and in early patterning of the developing eyes. Binds to the patched (PTCH1) receptor, which functions in association with smoothened (SMO), to activate the transcription of target genes. The protein is Tiggy-winkle hedgehog protein (shhb) of Danio rerio (Zebrafish).